A 278-amino-acid chain; its full sequence is Large ribosomal subunit protein uL2 (278 aa).

Disordered stretches follow at residues 1 to 58 (MGIR…GGGH) and 210 to 278 (GRMR…GKKR). The segment covering 23–33 (EVTRSEPEKSL) has biased composition (basic and acidic residues). The span at 40–49 (SGGRNSTGRI) shows a compositional bias: low complexity. Composition is skewed to basic residues over residues 210 to 220 (GRMRWKGKRPS) and 269 to 278 (VRRRRTGKKR).

The protein belongs to the universal ribosomal protein uL2 family. As to quaternary structure, part of the 50S ribosomal subunit. Forms a bridge to the 30S subunit in the 70S ribosome.

Functionally, one of the primary rRNA binding proteins. Required for association of the 30S and 50S subunits to form the 70S ribosome, for tRNA binding and peptide bond formation. It has been suggested to have peptidyltransferase activity; this is somewhat controversial. Makes several contacts with the 16S rRNA in the 70S ribosome. The chain is Large ribosomal subunit protein uL2 from Beutenbergia cavernae (strain ATCC BAA-8 / DSM 12333 / CCUG 43141 / JCM 11478 / NBRC 16432 / NCIMB 13614 / HKI 0122).